A 193-amino-acid polypeptide reads, in one-letter code: Dual-action ribosomal maturation protein DarP (193 aa).

Basic and acidic residues predominate over residues methionine 1–glutamate 10. 2 disordered regions span residues methionine 1–arginine 20 and glutamine 171–glutamate 193. Residues glycine 181–glutamate 193 are compositionally biased toward acidic residues.

The protein belongs to the DarP family.

It is found in the cytoplasm. Functionally, member of a network of 50S ribosomal subunit biogenesis factors which assembles along the 30S-50S interface, preventing incorrect 23S rRNA structures from forming. Promotes peptidyl transferase center (PTC) maturation. The polypeptide is Dual-action ribosomal maturation protein DarP (Xanthomonas oryzae pv. oryzae (strain MAFF 311018)).